Consider the following 504-residue polypeptide: Kinesin light chain 3 (504 aa).

The stretch at 90–150 (ALSAHVGALE…EEEKRHLEFL (61 aa)) forms a coiled coil. Residues 153-197 (LRQYDPPAESQQSESPPRRDSLASLFPSEEEERKGPEAAGAAAAQ) form a disordered region. The span at 158 to 167 (PPAESQQSES) shows a compositional bias: low complexity. Serine 173 is modified (phosphoserine). TPR repeat units follow at residues 207 to 240 (LRTLHNLVIQYAGQGRYEVAVPLCRQALEDLERS), 249 to 282 (ATMLNILALVYRDQNKYKEATDLLHDALQIREQT), 291 to 324 (AATLNNLAVLYGKRGRYREAEPLCQRALEIREKV), 333 to 366 (AKQLNNLALLCQNQGKFEDVERHYARALSIYEAL), and 375 to 408 (AKTKNNLASAYLKQNKYQQAEELYKEILHKEDLP). The segment at 411-438 (LGAPNTGTAGDAEQALRRSSSLSKIRES) is disordered. Phosphoserine is present on serine 466. The disordered stretch occupies residues 472 to 504 (VDAPRAPGTQFPSWHLDKAPRTLSASTQDLSPH). Positions 494-504 (LSASTQDLSPH) are enriched in polar residues. At threonine 498 the chain carries Phosphothreonine. Serine 502 carries the post-translational modification Phosphoserine.

Belongs to the kinesin light chain family. As to quaternary structure, oligomer composed of two heavy chains and two light chains. Associates with microtubulin in an ATP-dependent manner. Interacts with KIF5C. Interacts with ODF1. Interacts with LRGUK. Interacts with VDAC2.

The protein resides in the cytoplasm. It localises to the cytoskeleton. Its subcellular location is the mitochondrion. Functionally, kinesin is a microtubule-associated force-producing protein that may play a role in organelle transport. Plays a role during spermiogenesis in the development of the sperm tail midpiece and in the normal function of spermatozoa. May play a role in the formation of the mitochondrial sheath formation in the developing spermatid midpiece. This chain is Kinesin light chain 3 (KLC3), found in Homo sapiens (Human).